The primary structure comprises 108 residues: L-rhamnose mutarotase (108 aa).

Tyr-18 is a substrate binding site. His-22 functions as the Proton donor in the catalytic mechanism. Substrate is bound by residues Tyr-41 and 76–77 (WW).

This sequence belongs to the rhamnose mutarotase family. In terms of assembly, homodimer.

The protein localises to the cytoplasm. It carries out the reaction alpha-L-rhamnose = beta-L-rhamnose. The protein operates within carbohydrate metabolism; L-rhamnose metabolism. In terms of biological role, involved in the anomeric conversion of L-rhamnose. The protein is L-rhamnose mutarotase of Paraburkholderia phymatum (strain DSM 17167 / CIP 108236 / LMG 21445 / STM815) (Burkholderia phymatum).